Consider the following 645-residue polypeptide: MPAITLPDGSVRTFDGTVTGTTIAASIGPGLAKAAMAMEVDGKPVDIGTEISSDASVKFITRKDEDALEMIRHDAAHVLAEAVQSLWPETQVTIGPSIKDGFYYDFSREKPFTPEDFPAIEAKMREIVAANTPFVREVWDRDDAIRFFEEKGEDFKAQLIQDLPEDEQISIYRQGEWLDLCRGPHLRTTGDVGTAFKLMRVAGAYWRGDHRNPMLTRIYGTAWRDKKELDAHLLRLEEAEKRDHRRIGREMDLFHIQEEAVGQIFWHRKGWRLYTVLQDYMRRAQERNNYEEVRTPQLVDRALWEASGHWDKYRENMFIATVEDEDKTLALKPMNCPCHVQIFRHGLRSYRELPLRMAEFGACHRYEPSGALHGIMRVRGFTQDDAHIFCTDDQIADETAKFVKMLAEVYSDLGFDTFRVKFSDRPETRAGSDEVWDRAEGSLKKACEIAGVEYEYNPGEGAFYGPKLEFVLTDAIGRDWQCGTLQVDYVLPERLDASYIGEDSNRHRPVMLHRAILGSFERFIGILIEQYAGKFPLWLAPTQVVVASIVSDAADYANEVAATLKAAGLQVETDTRSDKINAKIREHSLARVPVILVVGRREAEERKVAMRRLGGAAQEILSLDDAVAALAKEAQAPDIARFAKD.

Residues 1–61 (MPAITLPDGS…SSDASVKFIT (61 aa)) form the TGS domain. The interval 243–536 (DHRRIGREMD…LIEQYAGKFP (294 aa)) is catalytic. Residues cysteine 336, histidine 387, and histidine 513 each coordinate Zn(2+).

This sequence belongs to the class-II aminoacyl-tRNA synthetase family. In terms of assembly, homodimer. Requires Zn(2+) as cofactor.

It localises to the cytoplasm. The enzyme catalyses tRNA(Thr) + L-threonine + ATP = L-threonyl-tRNA(Thr) + AMP + diphosphate + H(+). Functionally, catalyzes the attachment of threonine to tRNA(Thr) in a two-step reaction: L-threonine is first activated by ATP to form Thr-AMP and then transferred to the acceptor end of tRNA(Thr). Also edits incorrectly charged L-seryl-tRNA(Thr). This is Threonine--tRNA ligase from Gluconobacter oxydans (strain 621H) (Gluconobacter suboxydans).